Consider the following 128-residue polypeptide: Con-Ins F2 (128 aa).

A signal peptide spans 1 to 24; the sequence is MTTSSYFLLVALGLLLYVCRSSFG. 4 disulfide bridges follow: Cys-29/Cys-104, Cys-41/Cys-107, Cys-53/Cys-120, and Cys-106/Cys-111. A propeptide spans 59–89 (c peptide); that stretch reads LQGGTGKKRGRASLLRKRRAFLSMLKARAKR. Position 115 is a 4-carboxyglutamate; partial (Glu-115). Ser-127 is subject to Serine amide.

Belongs to the insulin family. Heterodimer of A and B chains; disulfide-linked. Expressed by the venom gland.

It localises to the secreted. Its function is as follows. This venom insulin facilitates prey capture by rapidly inducing hypoglycemic shock. Intraperitoneal injection of this peptide into zebrafish lowers blood glucose with the same potency than human insulin. In vivo, when applied to water, this peptide reduces overall locomotor activity of zebrafish larvae, observed as a significant decrease in the percentage of time spent swimming and movement frequency. The protein is Con-Ins F2 of Conus floridulus (Cone snail).